A 207-amino-acid chain; its full sequence is Uracil phosphoribosyltransferase (207 aa).

5-phospho-alpha-D-ribose 1-diphosphate-binding positions include Arg-77, Arg-102, and 129–137; that span reads DPMLATGGS. Residues Ile-192 and 197 to 199 each bind uracil; that span reads GDA. Asp-198 provides a ligand contact to 5-phospho-alpha-D-ribose 1-diphosphate.

The protein belongs to the UPRTase family. The cofactor is Mg(2+).

It carries out the reaction UMP + diphosphate = 5-phospho-alpha-D-ribose 1-diphosphate + uracil. The protein operates within pyrimidine metabolism; UMP biosynthesis via salvage pathway; UMP from uracil: step 1/1. Allosterically activated by GTP. Catalyzes the conversion of uracil and 5-phospho-alpha-D-ribose 1-diphosphate (PRPP) to UMP and diphosphate. The polypeptide is Uracil phosphoribosyltransferase (Ureaplasma urealyticum serovar 10 (strain ATCC 33699 / Western)).